Here is a 341-residue protein sequence, read N- to C-terminus: Processive diacylglycerol beta-glycosyltransferase (341 aa).

The protein belongs to the glycosyltransferase 2 family. The cofactor is Mg(2+).

The protein localises to the cell membrane. It carries out the reaction a 1,2-diacyl-sn-glycerol + UDP-alpha-D-glucose = a 1,2-diacyl-3-O-(beta-D-glucopyranosyl)-sn-glycerol + UDP + H(+). The catalysed reaction is a 1,2-diacyl-sn-glycerol + UDP-alpha-D-galactose = a 1,2-diacyl-3-O-(beta-D-galactosyl)-sn-glycerol + UDP + H(+). The enzyme catalyses a 1,2-diacyl-3-O-(beta-D-glucopyranosyl)-sn-glycerol + UDP-alpha-D-glucose = a 1,2-diacyl-3-O-(beta-D-Glc-(1-&gt;6)-beta-D-Glc)-sn-glycerol + UDP + H(+). It catalyses the reaction a 1,2-diacyl-3-O-(beta-D-galactosyl)-sn-glycerol + UDP-alpha-D-galactose = a 1,2-diacyl-3-O-[beta-D-galactosyl-(1-&gt;6)-beta-D-galactosyl]-sn-glycerol + UDP + H(+). Its pathway is glycolipid metabolism; diglucosyl-diacylglycerol biosynthesis. Its activity is regulated as follows. Activated by the negatively charged lipid dioleoylphosphatidylglycerol (DOPG) and inhibited by N-(n-nonyl)deoxygalactonojirimycin (C9J). Functionally, processive glycosyltransferase involved in the biosynthesis of both the non-bilayer-prone beta-monoglycosyldiacylglycerol and the bilayer-forming membrane lipid beta-diglycosyldiacylglycerol. These components contribute to regulate the properties and stability of the membrane. Catalyzes sequentially the transfers of glucosyl or galactosyl residues from UDP-Glc or UDP-Gal to diacylglycerol (DAG) acceptor to form the corresponding beta-glycosyl-DAG (3-O-(beta-D-glycopyranosyl)-1,2-diacyl-sn-glycerol), which then acts as acceptor to give beta-diglycosyl-DAG product (3-O-(beta-D-glycopyranosyl-beta-(1-&gt;6)-D-glycopyranosyl)-1,2-diacyl-sn-glycerol). Dioleoylglycerol (DOG) is a preferred sugar acceptor than 3-O-(beta-D-glucopyranosyl)-1,2-dioleoyl-sn-glycerol. This is Processive diacylglycerol beta-glycosyltransferase from Mycoplasma genitalium (strain ATCC 33530 / DSM 19775 / NCTC 10195 / G37) (Mycoplasmoides genitalium).